We begin with the raw amino-acid sequence, 154 residues long: Myoglobin (154 aa).

The Globin domain maps to 2 to 148 (GLSDGEWQLV…FRNDMAAKYK (147 aa)). A Phosphoserine modification is found at Ser-4. His-65 lines the nitrite pocket. His-65 contributes to the O2 binding site. Residue Thr-68 is modified to Phosphothreonine. His-94 lines the heme b pocket.

Belongs to the globin family. Monomeric.

The protein resides in the cytoplasm. It is found in the sarcoplasm. The enzyme catalyses Fe(III)-heme b-[protein] + nitric oxide + H2O = Fe(II)-heme b-[protein] + nitrite + 2 H(+). The catalysed reaction is H2O2 + AH2 = A + 2 H2O. Functionally, monomeric heme protein which primary function is to store oxygen and facilitate its diffusion within muscle tissues. Reversibly binds oxygen through a pentacoordinated heme iron and enables its timely and efficient release as needed during periods of heightened demand. Depending on the oxidative conditions of tissues and cells, and in addition to its ability to bind oxygen, it also has a nitrite reductase activity whereby it regulates the production of bioactive nitric oxide. Under stress conditions, like hypoxia and anoxia, it also protects cells against reactive oxygen species thanks to its pseudoperoxidase activity. This chain is Myoglobin (MB), found in Saimiri sciureus (Common squirrel monkey).